The sequence spans 439 residues: Fibroleukin (439 aa).

Residues 1–23 form the signal peptide; sequence MKLANWYWLSSAVLATYGFLVVA. Asparagine 25 carries N-linked (GlcNAc...) asparagine glycosylation. The stretch at 73–165 forms a coiled coil; it reads SRIEEVFKEV…GRLEKLNLVN (93 aa). The segment at 103–126 is disordered; that stretch reads ADDNGDPGRNGLLLPSTGAPGEVG. N-linked (GlcNAc...) asparagine glycans are attached at residues asparagine 179, asparagine 235, asparagine 263, and asparagine 336. A Fibrinogen C-terminal domain is found at 204-436; sequence PVQHLIYKDC…EAKMMIRPKH (233 aa). The cysteines at positions 213 and 242 are disulfide-linked. Cysteines 371 and 384 form a disulfide.

Homotetramer; disulfide-linked. In terms of tissue distribution, constitutively expressed in cytotoxic T-cells.

Its subcellular location is the secreted. Functionally, may play a role in physiologic lymphocyte functions at mucosal sites. The protein is Fibroleukin (FGL2) of Homo sapiens (Human).